The following is a 192-amino-acid chain: Small ribosomal subunit protein eS7 (192 aa).

This sequence belongs to the eukaryotic ribosomal protein eS7 family.

The polypeptide is Small ribosomal subunit protein eS7 (RPS7) (Secale cereale (Rye)).